We begin with the raw amino-acid sequence, 430 residues long: Methylenetetrahydrofolate--tRNA-(uracil-5-)-methyltransferase TrmFO (430 aa).

9–14 (GAGLAG) contributes to the FAD binding site.

The protein belongs to the MnmG family. TrmFO subfamily. Requires FAD as cofactor.

The protein resides in the cytoplasm. The catalysed reaction is uridine(54) in tRNA + (6R)-5,10-methylene-5,6,7,8-tetrahydrofolate + NADH + H(+) = 5-methyluridine(54) in tRNA + (6S)-5,6,7,8-tetrahydrofolate + NAD(+). The enzyme catalyses uridine(54) in tRNA + (6R)-5,10-methylene-5,6,7,8-tetrahydrofolate + NADPH + H(+) = 5-methyluridine(54) in tRNA + (6S)-5,6,7,8-tetrahydrofolate + NADP(+). In terms of biological role, catalyzes the folate-dependent formation of 5-methyl-uridine at position 54 (M-5-U54) in all tRNAs. This is Methylenetetrahydrofolate--tRNA-(uracil-5-)-methyltransferase TrmFO from Fervidobacterium nodosum (strain ATCC 35602 / DSM 5306 / Rt17-B1).